Reading from the N-terminus, the 454-residue chain is Bifunctional protein GlmU (454 aa).

Positions 1–226 (MALNVVILAA…AVEVEGANNR (226 aa)) are pyrophosphorylase. Residues 8–11 (LAAG), K22, Q73, 78–79 (GT), 100–102 (YGD), G137, E151, N166, and N224 contribute to the UDP-N-acetyl-alpha-D-glucosamine site. Residue D102 participates in Mg(2+) binding. N224 contributes to the Mg(2+) binding site. The linker stretch occupies residues 227-247 (VQLAQLERAYQARAAEKLMLE). The segment at 248-454 (GANLRDPARI…GWARPVKKAK (207 aa)) is N-acetyltransferase. Residues R330 and K348 each coordinate UDP-N-acetyl-alpha-D-glucosamine. H360 functions as the Proton acceptor in the catalytic mechanism. 2 residues coordinate UDP-N-acetyl-alpha-D-glucosamine: Y363 and N374. Residues A377, 383–384 (NY), S402, A420, and R437 contribute to the acetyl-CoA site.

The protein in the N-terminal section; belongs to the N-acetylglucosamine-1-phosphate uridyltransferase family. This sequence in the C-terminal section; belongs to the transferase hexapeptide repeat family. In terms of assembly, homotrimer. Mg(2+) serves as cofactor.

The protein resides in the cytoplasm. The catalysed reaction is alpha-D-glucosamine 1-phosphate + acetyl-CoA = N-acetyl-alpha-D-glucosamine 1-phosphate + CoA + H(+). It carries out the reaction N-acetyl-alpha-D-glucosamine 1-phosphate + UTP + H(+) = UDP-N-acetyl-alpha-D-glucosamine + diphosphate. Its pathway is nucleotide-sugar biosynthesis; UDP-N-acetyl-alpha-D-glucosamine biosynthesis; N-acetyl-alpha-D-glucosamine 1-phosphate from alpha-D-glucosamine 6-phosphate (route II): step 2/2. It functions in the pathway nucleotide-sugar biosynthesis; UDP-N-acetyl-alpha-D-glucosamine biosynthesis; UDP-N-acetyl-alpha-D-glucosamine from N-acetyl-alpha-D-glucosamine 1-phosphate: step 1/1. It participates in bacterial outer membrane biogenesis; LPS lipid A biosynthesis. In terms of biological role, catalyzes the last two sequential reactions in the de novo biosynthetic pathway for UDP-N-acetylglucosamine (UDP-GlcNAc). The C-terminal domain catalyzes the transfer of acetyl group from acetyl coenzyme A to glucosamine-1-phosphate (GlcN-1-P) to produce N-acetylglucosamine-1-phosphate (GlcNAc-1-P), which is converted into UDP-GlcNAc by the transfer of uridine 5-monophosphate (from uridine 5-triphosphate), a reaction catalyzed by the N-terminal domain. The chain is Bifunctional protein GlmU from Shewanella piezotolerans (strain WP3 / JCM 13877).